The sequence spans 274 residues: Protein RecA (274 aa).

Residue 43–50 (GPESSGKT) coordinates ATP.

Belongs to the RecA family.

It localises to the cytoplasm. Can catalyze the hydrolysis of ATP in the presence of single-stranded DNA, the ATP-dependent uptake of single-stranded DNA by duplex DNA, and the ATP-dependent hybridization of homologous single-stranded DNAs. It interacts with LexA causing its activation and leading to its autocatalytic cleavage. In Neisseria flavescens, this protein is Protein RecA.